The following is a 141-amino-acid chain: Nucleoside diphosphate kinase (141 aa).

The ATP site is built by K11, F59, R87, T93, R104, and N114. The active-site Pros-phosphohistidine intermediate is the H117.

The protein belongs to the NDK family. Homotetramer. Mg(2+) serves as cofactor.

Its subcellular location is the cytoplasm. It catalyses the reaction a 2'-deoxyribonucleoside 5'-diphosphate + ATP = a 2'-deoxyribonucleoside 5'-triphosphate + ADP. The catalysed reaction is a ribonucleoside 5'-diphosphate + ATP = a ribonucleoside 5'-triphosphate + ADP. Major role in the synthesis of nucleoside triphosphates other than ATP. The ATP gamma phosphate is transferred to the NDP beta phosphate via a ping-pong mechanism, using a phosphorylated active-site intermediate. The sequence is that of Nucleoside diphosphate kinase from Vibrio vulnificus (strain CMCP6).